Here is a 100-residue protein sequence, read N- to C-terminus: UPF0251 protein swp_0615 (100 aa).

The protein belongs to the UPF0251 family.

The sequence is that of UPF0251 protein swp_0615 from Shewanella piezotolerans (strain WP3 / JCM 13877).